A 35-amino-acid chain; its full sequence is Toxin Ado1 (35 aa).

Intrachain disulfides connect Cys5–Cys20, Cys12–Cys25, and Cys19–Cys32.

It localises to the secreted. Binds reversibly and blocks P/Q-type voltage-gated calcium channels (Cav). This Agriosphodrus dohrni (Japanese assassin-bug) protein is Toxin Ado1.